Here is a 196-residue protein sequence, read N- to C-terminus: Probable GTP-binding protein EngB (196 aa).

The EngB-type G domain occupies 24–196; sequence ELSEVALSGR…IWNLIEPYIS (173 aa). Residues 32-39, 59-63, 77-80, 144-147, and 176-178 each bind GTP; these read GRSNVGKS, GKTQT, DVPG, TKED, and YSS. Ser39 and Thr61 together coordinate Mg(2+).

Belongs to the TRAFAC class TrmE-Era-EngA-EngB-Septin-like GTPase superfamily. EngB GTPase family. Mg(2+) is required as a cofactor.

Necessary for normal cell division and for the maintenance of normal septation. The protein is Probable GTP-binding protein EngB of Staphylococcus aureus (strain MW2).